Here is a 152-residue protein sequence, read N- to C-terminus: Large ribosomal subunit protein bL9 (152 aa).

Belongs to the bacterial ribosomal protein bL9 family.

In terms of biological role, binds to the 23S rRNA. The chain is Large ribosomal subunit protein bL9 from Prochlorococcus marinus (strain MIT 9211).